A 279-amino-acid chain; its full sequence is Phosphate import ATP-binding protein PstB 1 (279 aa).

Residues 26 to 274 enclose the ABC transporter domain; that stretch reads VMDCKLDKIF…PREQLTSDYI (249 aa). Position 59-66 (59-66) interacts with ATP; that stretch reads GPSGCGKS.

Belongs to the ABC transporter superfamily. Phosphate importer (TC 3.A.1.7) family. The complex is composed of two ATP-binding proteins (PstB), two transmembrane proteins (PstC and PstA) and a solute-binding protein (PstS).

It is found in the cell inner membrane. The enzyme catalyses phosphate(out) + ATP + H2O = ADP + 2 phosphate(in) + H(+). Its function is as follows. Part of the ABC transporter complex PstSACB involved in phosphate import. Responsible for energy coupling to the transport system. The polypeptide is Phosphate import ATP-binding protein PstB 1 (Pseudomonas putida (strain ATCC 47054 / DSM 6125 / CFBP 8728 / NCIMB 11950 / KT2440)).